Consider the following 463-residue polypeptide: Bifunctional protein GlmU (463 aa).

Residues 1–233 form a pyrophosphorylase region; sequence MSKKSTFIIL…NFEVMGINSR (233 aa). Residues 10–13, Lys-24, Gln-76, 81–82, 104–106, Gly-143, Glu-158, Asn-173, and Asn-231 each bind UDP-N-acetyl-alpha-D-glucosamine; these read LAAG, GT, and YGD. Asp-106 lines the Mg(2+) pocket. Asn-231 is a binding site for Mg(2+). The linker stretch occupies residues 234 to 254; that stretch reads YELFVAEQELKLRINKEHLSK. The interval 255-463 is N-acetyltransferase; the sequence is GVQIIDIYST…LRRKQMYENR (209 aa). UDP-N-acetyl-alpha-D-glucosamine contacts are provided by Arg-336 and Lys-354. The active-site Proton acceptor is the His-366. UDP-N-acetyl-alpha-D-glucosamine is bound by residues Tyr-369 and Asn-380. Residues 389–390, Ala-426, and Arg-443 each bind acetyl-CoA; that span reads NY.

It in the N-terminal section; belongs to the N-acetylglucosamine-1-phosphate uridyltransferase family. In the C-terminal section; belongs to the transferase hexapeptide repeat family. As to quaternary structure, homotrimer. It depends on Mg(2+) as a cofactor.

It localises to the cytoplasm. The enzyme catalyses alpha-D-glucosamine 1-phosphate + acetyl-CoA = N-acetyl-alpha-D-glucosamine 1-phosphate + CoA + H(+). It catalyses the reaction N-acetyl-alpha-D-glucosamine 1-phosphate + UTP + H(+) = UDP-N-acetyl-alpha-D-glucosamine + diphosphate. Its pathway is nucleotide-sugar biosynthesis; UDP-N-acetyl-alpha-D-glucosamine biosynthesis; N-acetyl-alpha-D-glucosamine 1-phosphate from alpha-D-glucosamine 6-phosphate (route II): step 2/2. It functions in the pathway nucleotide-sugar biosynthesis; UDP-N-acetyl-alpha-D-glucosamine biosynthesis; UDP-N-acetyl-alpha-D-glucosamine from N-acetyl-alpha-D-glucosamine 1-phosphate: step 1/1. The protein operates within bacterial outer membrane biogenesis; LPS lipid A biosynthesis. Its function is as follows. Catalyzes the last two sequential reactions in the de novo biosynthetic pathway for UDP-N-acetylglucosamine (UDP-GlcNAc). The C-terminal domain catalyzes the transfer of acetyl group from acetyl coenzyme A to glucosamine-1-phosphate (GlcN-1-P) to produce N-acetylglucosamine-1-phosphate (GlcNAc-1-P), which is converted into UDP-GlcNAc by the transfer of uridine 5-monophosphate (from uridine 5-triphosphate), a reaction catalyzed by the N-terminal domain. In Caldicellulosiruptor saccharolyticus (strain ATCC 43494 / DSM 8903 / Tp8T 6331), this protein is Bifunctional protein GlmU.